Reading from the N-terminus, the 415-residue chain is Serine hydroxymethyltransferase (415 aa).

(6S)-5,6,7,8-tetrahydrofolate-binding positions include Leu117 and 121-123 (GHL). Lys226 bears the N6-(pyridoxal phosphate)lysine mark. Glu241 is a (6S)-5,6,7,8-tetrahydrofolate binding site.

This sequence belongs to the SHMT family. Homodimer. It depends on pyridoxal 5'-phosphate as a cofactor.

Its subcellular location is the cytoplasm. The enzyme catalyses (6R)-5,10-methylene-5,6,7,8-tetrahydrofolate + glycine + H2O = (6S)-5,6,7,8-tetrahydrofolate + L-serine. It functions in the pathway one-carbon metabolism; tetrahydrofolate interconversion. The protein operates within amino-acid biosynthesis; glycine biosynthesis; glycine from L-serine: step 1/1. Its function is as follows. Catalyzes the reversible interconversion of serine and glycine with tetrahydrofolate (THF) serving as the one-carbon carrier. This reaction serves as the major source of one-carbon groups required for the biosynthesis of purines, thymidylate, methionine, and other important biomolecules. Also exhibits THF-independent aldolase activity toward beta-hydroxyamino acids, producing glycine and aldehydes, via a retro-aldol mechanism. This chain is Serine hydroxymethyltransferase, found in Bacillus pumilus (strain SAFR-032).